The chain runs to 151 residues: Single-stranded DNA-binding protein, mitochondrial (151 aa).

The transit peptide at 1 to 16 (MFRRPVLQVFRQFVRQ) directs the protein to the mitochondrion. The SSB domain maps to 30 to 141 (LNRVQLLGRV…IIADNIIFLS (112 aa)). Residues S67 and S79 each carry the phosphoserine modification. K113 carries the N6-acetyllysine modification. K122 carries the post-translational modification N6-succinyllysine.

In terms of assembly, homotetramer. Interacts with MPG/AAG, through inhibition of its glycosylase activity it potentially prevents formation of DNA breaks in ssDNA, ensuring that base removal primarily occurs in dsDNA. Interacts with POLDIP2. Interacts with PRIMPOL.

The protein resides in the mitochondrion. Its subcellular location is the mitochondrion matrix. The protein localises to the mitochondrion nucleoid. In terms of biological role, binds preferentially and cooperatively to pyrimidine rich single-stranded DNA (ss-DNA). In vitro, required to maintain the copy number of mitochondrial DNA (mtDNA) and plays a crucial role during mtDNA replication by stimulating the activity of the replisome components POLG and TWNK at the replication fork. Promotes the activity of the gamma complex polymerase POLG, largely by organizing the template DNA and eliminating secondary structures to favor ss-DNA conformations that facilitate POLG activity. In addition it is able to promote the 5'-3' unwinding activity of the mtDNA helicase TWNK. May also function in mtDNA repair. This Rattus norvegicus (Rat) protein is Single-stranded DNA-binding protein, mitochondrial (Ssbp1).